Consider the following 943-residue polypeptide: Isoleucine--tRNA ligase (943 aa).

Residues 58–68 (PYANGSIHIGH) carry the 'HIGH' region motif. E567 lines the L-isoleucyl-5'-AMP pocket. The 'KMSKS' region motif lies at 608–612 (KMSKS). K611 contributes to the ATP binding site. Residues C906, C909, C926, and C929 each contribute to the Zn(2+) site.

It belongs to the class-I aminoacyl-tRNA synthetase family. IleS type 1 subfamily. As to quaternary structure, monomer. Zn(2+) serves as cofactor.

The protein resides in the cytoplasm. The catalysed reaction is tRNA(Ile) + L-isoleucine + ATP = L-isoleucyl-tRNA(Ile) + AMP + diphosphate. Functionally, catalyzes the attachment of isoleucine to tRNA(Ile). As IleRS can inadvertently accommodate and process structurally similar amino acids such as valine, to avoid such errors it has two additional distinct tRNA(Ile)-dependent editing activities. One activity is designated as 'pretransfer' editing and involves the hydrolysis of activated Val-AMP. The other activity is designated 'posttransfer' editing and involves deacylation of mischarged Val-tRNA(Ile). The protein is Isoleucine--tRNA ligase of Pseudomonas aeruginosa (strain UCBPP-PA14).